The chain runs to 352 residues: tRNA-specific 2-thiouridylase MnmA (352 aa).

Residues 7-14 (GLSGGVDS) and Leu33 contribute to the ATP site. Residue Cys94 is the Nucleophile of the active site. A disulfide bond links Cys94 and Cys193. Gly119 serves as a coordination point for ATP. Residues 143 to 145 (KDQ) are interaction with tRNA. Cys193 (cysteine persulfide intermediate) is an active-site residue. An interaction with tRNA region spans residues 298–299 (RY).

It belongs to the MnmA/TRMU family.

Its subcellular location is the cytoplasm. The enzyme catalyses S-sulfanyl-L-cysteinyl-[protein] + uridine(34) in tRNA + AH2 + ATP = 2-thiouridine(34) in tRNA + L-cysteinyl-[protein] + A + AMP + diphosphate + H(+). In terms of biological role, catalyzes the 2-thiolation of uridine at the wobble position (U34) of tRNA, leading to the formation of s(2)U34. This is tRNA-specific 2-thiouridylase MnmA from Nostoc sp. (strain PCC 7120 / SAG 25.82 / UTEX 2576).